A 356-amino-acid chain; its full sequence is Homoserine O-acetyltransferase (356 aa).

The region spanning N50–L335 is the AB hydrolase-1 domain. S146 functions as the Nucleophile in the catalytic mechanism. R215 is a binding site for substrate. Residues D302 and H331 contribute to the active site. Residue D332 participates in substrate binding.

Belongs to the AB hydrolase superfamily. MetX family. Homodimer.

It localises to the cytoplasm. It carries out the reaction L-homoserine + acetyl-CoA = O-acetyl-L-homoserine + CoA. It participates in amino-acid biosynthesis; L-methionine biosynthesis via de novo pathway; O-acetyl-L-homoserine from L-homoserine: step 1/1. Functionally, transfers an acetyl group from acetyl-CoA to L-homoserine, forming acetyl-L-homoserine. This chain is Homoserine O-acetyltransferase, found in Chlorobaculum tepidum (strain ATCC 49652 / DSM 12025 / NBRC 103806 / TLS) (Chlorobium tepidum).